The chain runs to 157 residues: Large ribosomal subunit protein uL15 (157 aa).

The protein belongs to the universal ribosomal protein uL15 family. As to quaternary structure, part of the 50S ribosomal subunit.

Its function is as follows. Binds to the 23S rRNA. The sequence is that of Large ribosomal subunit protein uL15 from Ehrlichia ruminantium (strain Welgevonden).